Here is a 377-residue protein sequence, read N- to C-terminus: D-alanine--D-alanine ligase (377 aa).

The region spanning 140–349 (KELLTVNNIR…NVELVDKLID (210 aa)) is the ATP-grasp domain. 170 to 225 (VKDLGDVVFVKAANQGSSVGVSRAKTADEFEAALTDSFQYDYKVLIEAAVKGPREL) contacts ATP. Mg(2+) is bound by residues Asp-303, Glu-316, and Asn-318.

This sequence belongs to the D-alanine--D-alanine ligase family. Requires Mg(2+) as cofactor. Mn(2+) serves as cofactor.

It localises to the cytoplasm. The enzyme catalyses 2 D-alanine + ATP = D-alanyl-D-alanine + ADP + phosphate + H(+). It participates in cell wall biogenesis; peptidoglycan biosynthesis. In terms of biological role, cell wall formation. The sequence is that of D-alanine--D-alanine ligase from Leuconostoc citreum (strain KM20).